The primary structure comprises 22 residues: Mu-conotoxin MIIIA (22 aa).

A Pyrrolidone carboxylic acid modification is found at Gln-1. Disulfide bonds link Cys-3/Cys-15, Cys-4/Cys-21, and Cys-10/Cys-22. Cysteine amide is present on Cys-22.

This sequence belongs to the conotoxin M superfamily. As to expression, expressed by the venom duct.

Its subcellular location is the secreted. Its function is as follows. Mu-conotoxins block voltage-gated sodium channels (Nav). This synthetic toxin potently blocks rNav1.3/SCN3A. It also moderately blocks rNav1.1/SCN1A, rNav1.2/SCN2A, rNav1.4/SCN4A, mNav1.6/SCN8A, and Nav1.7/SCN9A. sodium channels. This block is very slowly reversible. The protein is Mu-conotoxin MIIIA of Conus magus (Magical cone).